The chain runs to 286 residues: NAD kinase (286 aa).

Asp74 serves as the catalytic Proton acceptor. Residues 74–75 (DG), 148–149 (ND), Asp178, Ala186, 189–194 (TAYNLS), and Gln244 each bind NAD(+).

This sequence belongs to the NAD kinase family. The cofactor is a divalent metal cation.

It localises to the cytoplasm. It catalyses the reaction NAD(+) + ATP = ADP + NADP(+) + H(+). Its function is as follows. Involved in the regulation of the intracellular balance of NAD and NADP, and is a key enzyme in the biosynthesis of NADP. Catalyzes specifically the phosphorylation on 2'-hydroxyl of the adenosine moiety of NAD to yield NADP. In Campylobacter jejuni subsp. jejuni serotype O:23/36 (strain 81-176), this protein is NAD kinase.